The sequence spans 394 residues: Phosphoglycerate kinase (394 aa).

Substrate-binding positions include 21–23, R37, 60–63, R115, and R148; these read DLN and HLGR. Residues K199, E321, and 347–350 each bind ATP; that span reads GGDT.

This sequence belongs to the phosphoglycerate kinase family. Monomer.

The protein localises to the cytoplasm. The enzyme catalyses (2R)-3-phosphoglycerate + ATP = (2R)-3-phospho-glyceroyl phosphate + ADP. It participates in carbohydrate degradation; glycolysis; pyruvate from D-glyceraldehyde 3-phosphate: step 2/5. The polypeptide is Phosphoglycerate kinase (Azoarcus sp. (strain BH72)).